The sequence spans 404 residues: Neutral protease 2 homolog AFLA_065450 (404 aa).

The signal sequence occupies residues 1–19; that stretch reads MRFISASSLLLALAPTLNA. A propeptide spanning residues 20-185 is cleaved from the precursor; the sequence is VPVEVAGSAQ…TQAVKILERR (166 aa). 2 cysteine pairs are disulfide-bonded: Cys-191/Cys-263 and Cys-270/Cys-288. Zn(2+) is bound at residue His-313. Glu-314 is a catalytic residue. Zn(2+) is bound by residues His-317 and Asp-328.

It belongs to the peptidase M35 family. Zn(2+) is required as a cofactor.

It localises to the secreted. It carries out the reaction Preferential cleavage of bonds with hydrophobic residues in P1'. Also 3-Asn-|-Gln-4 and 8-Gly-|-Ser-9 bonds in insulin B chain.. In terms of biological role, secreted metalloproteinase that allows assimilation of proteinaceous substrates. Shows high activities on basic nuclear substrates such as histone and protamine. This is Neutral protease 2 homolog AFLA_065450 from Aspergillus flavus (strain ATCC 200026 / FGSC A1120 / IAM 13836 / NRRL 3357 / JCM 12722 / SRRC 167).